A 107-amino-acid chain; its full sequence is Glutaconyl-CoA decarboxylase subunit delta (107 aa).

The chain crosses the membrane as a helical span at residues 10–32; that stretch reads MINMTIVFGVLIVLGILMVLIHA. The segment at 37-60 is disordered; sequence KKVQGKKKPVVAKPAPSAAASKRQ. A compositionally biased stretch (low complexity) spans 47 to 57; it reads VAKPAPSAAAS.

The protein belongs to the OadG family. In terms of assembly, heterooctamer consisting of two alpha, two beta, two gamma and two delta subunits.

It is found in the cell membrane. It carries out the reaction (2E)-glutaconyl-CoA + Na(+)(in) + H(+) = (2E)-butenoyl-CoA + Na(+)(out) + CO2. Its pathway is amino-acid degradation; L-glutamate degradation via hydroxyglutarate pathway; crotonoyl-CoA from L-glutamate: step 5/5. Functionally, part of the primary sodium pump glutaconyl-CoA decarboxylase (GCD). Possible membrane anchor for the alpha subunit. The polypeptide is Glutaconyl-CoA decarboxylase subunit delta (gcdD) (Acidaminococcus fermentans (strain ATCC 25085 / DSM 20731 / CCUG 9996 / CIP 106432 / VR4)).